Reading from the N-terminus, the 327-residue chain is MATLKDIAIEAGVSLATVSRVLNDDPTLNVKEETKHRILEIAEKLEYKTSSARKLQTGAVNQHHILAIYSYQQELEINDPYYLAIRHGIETQCEKLGIELTNCYEHSGLPDIKNVTGILIVGKPTPALRAAASALTDNICFIDFHEPGSGYDAVDIDLARISKEIIDFYINQGVNRIGFIGGEDEPGKADIREVAFAEYGRLKQVVREEDIWRGGFSSSSGYELAKQMLAREDYPKALFVASDSIAIGVLRAIHERGLNIPQDISLISVNDIPTARFTFPPLSTVRIHSEMMGSQGVNLVYEKARDGRALPLLVFVPSKLKLRGTTR.

Residues 1–57 (MATLKDIAIEAGVSLATVSRVLNDDPTLNVKEETKHRILEIAEKLEYKTSSARKLQT) form the HTH lacI-type domain. The segment at residues 4 to 23 (LKDIAIEAGVSLATVSRVLN) is a DNA-binding region (H-T-H motif).

Its function is as follows. Repressor for beta galactosidase alpha and beta subunits (ebgA and ebgC). Binds lactose as an inducer. The polypeptide is HTH-type transcriptional regulator EbgR (ebgR) (Escherichia coli (strain K12)).